The following is a 460-amino-acid chain: Serine/threonine-protein kinase UL13 (460 aa).

The interval 1–37 (MATRGRPGAKQVADHSVSDGGEQRRIPQKPPGPERCD) is disordered. Residues 12 to 25 (VADHSVSDGGEQRR) are compositionally biased toward basic and acidic residues. Positions 95-460 (LEPYRFLGRG…DVRRTVSALA (366 aa)) constitute a Protein kinase domain. ATP is bound by residues 101-109 (LGRGGYGSV) and lysine 120. Residue aspartate 219 is the Proton acceptor of the active site.

It belongs to the protein kinase superfamily. Ser/Thr protein kinase family. Post-translationally, autophosphorylated.

It localises to the virion tegument. The protein resides in the host nucleus. The catalysed reaction is L-seryl-[protein] + ATP = O-phospho-L-seryl-[protein] + ADP + H(+). It carries out the reaction L-threonyl-[protein] + ATP = O-phospho-L-threonyl-[protein] + ADP + H(+). Multifunctional serine/threonine kinase that plays a role in several processes including egress of virus particles from the nucleus, modulation of the actin cytoskeleton and regulation of viral and cellular gene expression. Regulates the nuclear localization of viral envelopment factors UL34 and UL31 homologs, by phosphorylating the US3 kinase homolog, indicating a role in nuclear egress. Disrupts host nuclear lamins, including LMNA and LMNB1. Phosphorylates the viral Fc receptor composed of glycoproteins E (gE) and I (gI). Phosphorylation of glycoprotein E (gE) by UL13 homolog alters its subcellular localization, from the host early endosome to the plasma membrane. Participates in the transcriptional regulation of cellular and viral mRNAs mainly by phosphorylating the viral transcriptional regulator ICP22 homolog. The chain is Serine/threonine-protein kinase UL13 (UL13) from Amazona oratrix (yellow-headed parrot).